The primary structure comprises 789 residues: MLTTGIFWMTVLISHIQERGIVGVEGQELVHPKKLPLLHKRDLERIHDSDIPEEYEEELLYEIKLGKKTLILHLLKAREFLSSNYSETYYNVKREVFTKHPQILDHCFYQGSIIHEFDSAASISTCNGLRGFFRVNDQRYLIEPVKYSDDGEHLVYKYNVKAPYATNHSCVGLNFTKKSALIDVENIEEHNAEDHHKEKFIELFVVADEYVYRRNNKPQNKLRKRIWGMVNFVNMIYKTLNIHVTLAGFEIWSAGDKIEIVSNLESTLLHFSTWQETVLKKRKDFDHVILLSGKWLYTSMQGIAYPGGICQILRSCSVVKDLLPDVNIIGNRMAHQLGHSLGMQHDGFPCTCPLGKCVMGDGSIPAIKFSKCSQTQYQQFLQDQKPACILNNPFPEEFNDYPFCGNKKVDEGEECDCGPVQECTNPCCDAHKCVLKPGFTCVEGECCESCQMKKEGAVCRLAKNECDISEVCTGYSPECPKDEFQANGFPCRNGEGYCFMGLCPTRNEQCSELFIGGAEESHSLCYRMNKKGNRFGYCKNKGNTFVPCEEKDLKCGKIYCSGGRPSSRLGEDKAYNLKNVKQNVTIKCRTMFLHHNSRDMGLVNSGTKCGDGMVCSNGECIEMEKAYNSTICSSPCDENDVDDNEPECQCEEGSIITEWGEALNLTSVSIMVIVLVMVIIGVGLVILLIRYQKCIKMKQVQSSPREIRGVENKGYFPEEHQTRSEPILTDIHPLHTTAESLERVPSSFSSPHYITLKSVSKDSRGIADPKQTDNVNLNLDTQSGCERLG.

Residues 1–23 form the signal peptide; sequence MLTTGIFWMTVLISHIQERGIVG. The propeptide occupies 24–176; the sequence is VEGQELVHPK…NHSCVGLNFT (153 aa). Residues 24–667 are Extracellular-facing; sequence VEGQELVHPK…EWGEALNLTS (644 aa). 3 N-linked (GlcNAc...) asparagine glycosylation sites follow: N84, N167, and N174. Residues 199 to 393 form the Peptidase M12B domain; sequence KFIELFVVAD…QKPACILNNP (195 aa). 4 disulfides stabilise this stretch: C310–C388, C350–C372, C352–C357, and C459–C479. The Disintegrin domain maps to 401–487; it reads YPFCGNKKVD…ECPKDEFQAN (87 aa). Residues N583, N628, and N664 are each glycosylated (N-linked (GlcNAc...) asparagine). Residues 668-689 form a helical membrane-spanning segment; the sequence is VSIMVIVLVMVIIGVGLVILLI. Residues 690–789 are Cytoplasmic-facing; sequence RYQKCIKMKQ…DTQSGCERLG (100 aa). Positions 764 to 789 are disordered; that stretch reads RGIADPKQTDNVNLNLDTQSGCERLG. Polar residues predominate over residues 772–789; it reads TDNVNLNLDTQSGCERLG.

Interacts with ITM2B in sperm; the interaction increases following capacitation. Interacts with HSPA5 and CANX. As to expression, expressed in both the head and tails of sperm (at protein level). Expressed in the epididymis (at protein level). Abundantly expressed in the apical region of the proximal caput epididymal epithelium, with decreasing expression in the mid and distal caput epididymal epithelium.

It is found in the membrane. Its function is as follows. Required for normal male fertility via maintenance of epithelial cell morphology in the caput epididymis and subsequently correct epididymis lumen structure required for sperm development. Plays a role in sperm motility, flagella morphology and tyrosine phosphorylation during sperm capacitance. Plays a role in normal expression levels of HSPA5, ITM2B and ADAM2 in sperm both prior to and post-capacitation. This is a non catalytic metalloprotease-like protein. The chain is Disintegrin and metalloproteinase domain-containing protein 7 from Mus musculus (Mouse).